A 334-amino-acid polypeptide reads, in one-letter code: MRLTPRALCSAAQAAWRENFPLCGRDVARWFPGHMAKGLKKMQSSLKLVDCIIEVHDARIPLSGRNPLFQETLGLKPHLLVLNKMDLADLTEQQKIMQHLEGEGLKNVIFTNCVKDENVKQIIPMVTELIGRSHRYHRKENLEYCIMVIGVPNVGKSSLINSLRRQHLRKGKATRVGGEPGITRAVMSKIQVSERPLMFLLDTPGVLAPRIESVETGLKLALCGTVLDHLVGEETMADYLLYTLNKHQRFGYVQHYGLGSACDNVERVLKSVAVKLGKTQKVKVLTGTGNVNIIQPNYPAAARDFLQTFRRGLLGSVMLDLDVLRGHPPAETLP.

Residues 36 to 209 enclose the CP-type G domain; the sequence is AKGLKKMQSS…LLDTPGVLAP (174 aa). GTP-binding positions include 83–86, 153–158, and Gly-205; these read NKMD and NVGKSS.

Belongs to the TRAFAC class YlqF/YawG GTPase family. MTG1 subfamily. In terms of assembly, associates with the mitochondrial ribosome large subunit; the association occurs in a GTP-dependent manner.

It is found in the mitochondrion inner membrane. Plays a role in the regulation of the mitochondrial ribosome assembly and of translational activity. Displays mitochondrial GTPase activity. In Homo sapiens (Human), this protein is Mitochondrial ribosome-associated GTPase 1 (MTG1).